The primary structure comprises 59 residues: UPF0434 protein VC_1876 (59 aa).

It belongs to the UPF0434 family.

This Vibrio cholerae serotype O1 (strain ATCC 39315 / El Tor Inaba N16961) protein is UPF0434 protein VC_1876.